Consider the following 958-residue polypeptide: Translation initiation factor IF-2 (958 aa).

2 disordered regions span residues 67–95 and 111–355; these read APAASRPAAPAPGPAAPKAPAPAPAAPAP and PAPA…VPRG. Over residues 75–95 the composition is skewed to pro residues; it reads APAPGPAAPKAPAPAPAAPAP. Low complexity predominate over residues 140–161; the sequence is PAPARQGGQAPRPGGPRPGNNP. Residues 195-206 are compositionally biased toward basic and acidic residues; that stretch reads RGERRNDGERPG. Low complexity predominate over residues 209–221; the sequence is RPAAGAGGPRPAA. A compositionally biased stretch (pro residues) spans 228–241; it reads PGAPRPGAPRPGAP. Residues 268–325 show a composition bias toward gly residues; that stretch reads GGAGRPGGAGRPGGGPGRPGGAPGAGTGGGAPAGGGFGKGGRGRGGTQGAFGKGGAGR. A compositionally biased stretch (basic residues) spans 326 to 335; it reads GKQRKSKRAK. The tr-type G domain maps to 450-621; the sequence is ARAPVVTVMG…AVLLTADAAL (172 aa). The G1 stretch occupies residues 459–466; sequence GHVDHGKT. Residue 459 to 466 coordinates GTP; the sequence is GHVDHGKT. The segment at 484-488 is G2; it reads GITQH. Positions 509–512 are G3; sequence DTPG. Residues 509–513 and 563–566 contribute to the GTP site; these read DTPGH and NKID. Residues 563–566 form a G4 region; it reads NKID. Positions 599–601 are G5; it reads SAR.

This sequence belongs to the TRAFAC class translation factor GTPase superfamily. Classic translation factor GTPase family. IF-2 subfamily.

The protein resides in the cytoplasm. One of the essential components for the initiation of protein synthesis. Protects formylmethionyl-tRNA from spontaneous hydrolysis and promotes its binding to the 30S ribosomal subunits. Also involved in the hydrolysis of GTP during the formation of the 70S ribosomal complex. The sequence is that of Translation initiation factor IF-2 from Paenarthrobacter aurescens (strain TC1).